We begin with the raw amino-acid sequence, 512 residues long: L-aspartate oxidase (512 aa).

Residues 17-20 and 46-53 each bind FAD; these read SGLA and SSAWAQGG. Arginine 278 (proton donor/acceptor) is an active-site residue. FAD-binding positions include glutamate 361 and 377–378; that span reads SL.

Belongs to the FAD-dependent oxidoreductase 2 family. NadB subfamily. Requires FAD as cofactor.

Its subcellular location is the cytoplasm. The enzyme catalyses L-aspartate + O2 = iminosuccinate + H2O2. The protein operates within cofactor biosynthesis; NAD(+) biosynthesis; iminoaspartate from L-aspartate (oxidase route): step 1/1. Its function is as follows. Catalyzes the oxidation of L-aspartate to iminoaspartate, the first step in the de novo biosynthesis of NAD(+). The sequence is that of L-aspartate oxidase (nadB) from Xylella fastidiosa (strain Temecula1 / ATCC 700964).